Consider the following 2636-residue polypeptide: Ankyrin repeat and KH domain-containing protein CBG24701 (2636 aa).

ANK repeat units lie at residues 252 to 281 (SRIT…DPNA), 286 to 317 (NCNT…KVDV), 361 to 390 (NDNS…KNQQ), 435 to 464 (NLPS…RIDE), 468 to 500 (HKNT…DVNA), 505 to 534 (SGDT…DLTT), 536 to 564 (KITP…TIPQ), 566 to 595 (QLSR…DLNF), 598 to 627 (DERT…SVNF), 632 to 661 (NDAT…DPML), and 665 to 695 (DGVN…NMDL). 3 disordered regions span residues 994-1030 (PIDA…TTIE), 1172-1191 (KSNR…KKGK), and 1230-1268 (NNTQ…VIDK). A compositionally biased stretch (polar residues) spans 1006–1030 (QQTGPKTTSLTTPQPDESNGATTIE). Over residues 1233–1245 (QVQQQQGQQQQGQ) the composition is skewed to low complexity. A compositionally biased stretch (basic and acidic residues) spans 1249–1260 (THSEGDGTERAK). ANK repeat units follow at residues 1273–1302 (TLET…NIEH), 1306–1335 (KGFT…AIEA), 1340–1369 (TKDT…NKEH), 1373–1402 (SDYT…EINS), 1408–1437 (LGIS…DINA), 1447–1476 (YRNT…NVEH), 1480–1509 (TGLT…DPNA), 1515–1546 (TKDT…DIRN), 1548–1577 (KGCS…DTDM), and 1581–1610 (RKMS…QFPN). Positions 1638-1696 (RNAKKAQAETAEETANRLLQLIDDEKERDINKKQKIKDKKKQKKEAKKKFQAEQEQLSA) form a coiled coil. The interval 1669–1857 (KKQKIKDKKK…SSISERQHSW (189 aa)) is disordered. The segment covering 1670 to 1686 (KQKIKDKKKQKKEAKKK) has biased composition (basic residues). The span at 1698 to 1708 (PSKPEPVVAPE) shows a compositional bias: pro residues. The segment covering 1709–1722 (PEPEPETEPVEEPA) has biased composition (acidic residues). Residues 1811–1829 (DWQKAGKEGKKVRPKREGR) show a composition bias toward basic and acidic residues. Residues 1832–1851 (APSSAGSSQAKHRSNTSSIS) show a composition bias toward polar residues. A KH domain is found at 1864 to 1929 (VKAYEFTVPG…DVVSMAVNII (66 aa)). 7 disordered regions span residues 1980–2182 (SASI…SLPS), 2196–2221 (FKPT…STAS), 2269–2292 (NSTA…SNDF), 2301–2320 (SNQK…NSQL), 2352–2417 (SQSS…TQQQ), 2444–2465 (MHRQ…NPYY), and 2539–2636 (GMMQ…SSRM). Positions 1994-2008 (SQCNRSSKSHGNQAT) are enriched in polar residues. Over residues 2025–2045 (TPPTQTQTKQQPTPSPQVQQP) the composition is skewed to low complexity. The segment covering 2057–2083 (SLAQSSVPQATENVTKPTQTPPASVQQ) has biased composition (polar residues). 2 stretches are compositionally biased toward low complexity: residues 2099–2119 (QVVQ…QRPQ) and 2139–2148 (QQHMQQIQQQ). A compositionally biased stretch (pro residues) spans 2167-2179 (PGPPVQPQTPPQS). Over residues 2269 to 2280 (NSTASSLNTATT) the composition is skewed to low complexity. Residues 2281-2292 (KNDTSDWGSNDF) are compositionally biased toward polar residues. Low complexity-rich tracts occupy residues 2361–2373 (QHQQ…MQDP) and 2391–2417 (PQQF…TQQQ). Composition is skewed to polar residues over residues 2449–2465 (NSSS…NPYY), 2565–2574 (RSASGSSQNR), and 2583–2595 (QQPQ…TQAD). The segment covering 2599 to 2615 (RLLLQQQQQQRSSQQQQ) has biased composition (low complexity). The span at 2616-2636 (NPTNQGLPQKWSNTWNSSSRM) shows a compositional bias: polar residues.

It belongs to the mask family.

The protein localises to the cytoplasm. This is Ankyrin repeat and KH domain-containing protein CBG24701 from Caenorhabditis briggsae.